Reading from the N-terminus, the 95-residue chain is Co-chaperonin GroES (95 aa).

Belongs to the GroES chaperonin family. In terms of assembly, heptamer of 7 subunits arranged in a ring. Interacts with the chaperonin GroEL.

The protein localises to the cytoplasm. Functionally, together with the chaperonin GroEL, plays an essential role in assisting protein folding. The GroEL-GroES system forms a nano-cage that allows encapsulation of the non-native substrate proteins and provides a physical environment optimized to promote and accelerate protein folding. GroES binds to the apical surface of the GroEL ring, thereby capping the opening of the GroEL channel. The protein is Co-chaperonin GroES of Geobacter sulfurreducens (strain ATCC 51573 / DSM 12127 / PCA).